We begin with the raw amino-acid sequence, 867 residues long: Cilium assembly protein DZIP1 (867 aa).

The segment at 12-203 is mediates interaction with PCM1; that stretch reads MPFQKHVYYP…KANYYQCHFC (192 aa). The interval 12-367 is mediates interaction with GLI3 and localization to the cilium basal body; sequence MPFQKHVYYP…QDFHNVMQLL (356 aa). The segment at 154–278 is required for interaction with DAZ1; sequence CDGEQSKKLL…SKEYEMQKTK (125 aa). The segment at 198-221 adopts a C2H2-type zinc-finger fold; the sequence is YQCHFCDKAFMNQAFLQSHIQRRH. Residue S226 is modified to Phosphoserine; by PLK1. 3 coiled-coil regions span residues 230–340, 401–445, and 568–588; these read YQKN…KSNI, TSMI…FTCN, and DQLH…EREI. The mediates interaction with GDI2 and RAB8A stretch occupies residues 446-617; that stretch reads PLNSISEPKG…EKALLSSDQC (172 aa). Composition is skewed to polar residues over residues 643–654, 671–680, and 708–718; these read LIRQKAVSTDRT, KSSTITTPPF, and NKGSFGKNTVK. Disordered stretches follow at residues 643-768 and 796-867; these read LIRQ…GGTN and SLEE…TSDV. The span at 722-733 shows a compositional bias: acidic residues; it reads DGTEGSEIEDTD. Residues 807–823 are compositionally biased toward basic and acidic residues; the sequence is SGKEQKEPPPAKNEPHF. Positions 848 to 859 are enriched in low complexity; that stretch reads SSTLKSSLVTVT.

It belongs to the DZIP C2H2-type zinc-finger protein family. Interacts with DAZ1. Interacts with the BBSome; recruits the BBSome to centriolar satellites of the cilium. Interacts with PCM1; localizes DZIP1 and the associated BBSome to centriolar satellites. Interacts with RAB8A (GDP-bound inactive form); recruits RAB8A to the basal body of the cilium and prevents its inhibition by GDI2. Interacts with GDI2; negatively regulates the interaction of GDI2 with GDP-bound RAB8A. Interacts with GLI3; retains GLI3 within the cytoplasm. Interacts with CEP164. Interacts with IFT88. In terms of processing, phosphorylation at Ser-226 by PLK1 before mitosis prevents interaction with PCM1 and localization to centriolar satellites. Thereby, it negatively regulates the localization of the BBSome to centriolar satellites. In terms of tissue distribution, predominantly expressed in testis (at protein level). Also expressed in fetal brain, adult oocytes and ovary. Expressed in undifferentiated ES cells. In testis, it is specifically expressed in germ cells (at protein level). Expressed in mature germ cells and secondary spermatocytes, while it is weakly or not expressed in primary spermatocytes.

The protein resides in the cytoplasm. The protein localises to the cytoskeleton. It localises to the cilium basal body. It is found in the microtubule organizing center. Its subcellular location is the centrosome. The protein resides in the centriolar satellite. The protein localises to the centriole. It localises to the nucleus. It is found in the nucleus speckle. In terms of biological role, molecular adapter that recruits protein complexes required for cilium assembly and function to the cilium basal body. At the exit of mitosis, localizes to the basal body and ciliary base of the forming primary cilium where it recruits and activates RAB8A to direct vesicle-mediated transport of proteins to the cilium. Also recruits the BBSome, a complex involved in cilium biogenesis, by bridging it to PCM1 at the centriolar satellites of the cilium. It is also required for the recruitment to the cilium basal body of the intraflagellar transport (IFT) machinery as well as the ciliary appendage proteins CEP164 and NINEIN. Functions as a regulator of Hedgehog signaling both through its role in cilium assembly but also probably through its ability to retain GLI3 within the cytoplasm. It is involved in spermatogenesis through its role in organization of the basal body and assembly of the sperm flagellum. Also indirectly involved in heart development through its function in ciliogenesis. The polypeptide is Cilium assembly protein DZIP1 (Homo sapiens (Human)).